A 172-amino-acid chain; its full sequence is uncharacterized protein (172 aa).

This is an uncharacterized protein from Treponema pallidum (strain Nichols).